The primary structure comprises 804 residues: Ribonucleoside-diphosphate reductase large subunit-like protein (804 aa).

Belongs to the ribonucleoside diphosphate reductase large chain family.

It is found in the virion. It localises to the host cytoplasm. Does not possess a ribonucleotide reductase activity. Betaherpesviruses probably use another strategy to expand the dNTP pool in a quiescent host cell. The chain is Ribonucleoside-diphosphate reductase large subunit-like protein from Homo sapiens (Human).